The following is a 271-amino-acid chain: Sec-independent protein translocase protein TatC (271 aa).

6 helical membrane-spanning segments follow: residues 35 to 55 (IIWT…WHEQ), 93 to 113 (AFIA…WLFI), 124 to 144 (YVLP…VFGY), 178 to 198 (IILG…LALM), 213 to 233 (SILV…IMNM), and 234 to 254 (CVFA…AFLV).

It belongs to the TatC family. Forms a complex with TatA.

Its subcellular location is the cell inner membrane. Part of the twin-arginine translocation (Tat) system that transports large folded proteins containing a characteristic twin-arginine motif in their signal peptide across membranes. The chain is Sec-independent protein translocase protein TatC from Koribacter versatilis (strain Ellin345).